Consider the following 311-residue polypeptide: Cytochrome c biogenesis protein CcsA (311 aa).

Helical transmembrane passes span 11–31 (VLLLGLMAFGALLLALPLAFW), 44–64 (VVQLLVVAANLLLTAQLLWRW), 68–88 (GHFPISNLYESLCFLAWGCTF), 101–121 (LVPAATTPMALVCVAFASFAL), 146–166 (VIMMSYAALLVGSLLSAAVLF), 217–237 (TITVGFLLLTVGIISGAVWAN), 251–268 (TWALICWLVYAAYLHTRL), and 280–300 (VAVSGLFVISVCYIGVNLLGI).

Belongs to the CcmF/CycK/Ccl1/NrfE/CcsA family. May interact with ccs1.

It is found in the cellular thylakoid membrane. Required during biogenesis of c-type cytochromes (cytochrome c6 and cytochrome f) at the step of heme attachment. This Synechococcus sp. (strain RCC307) protein is Cytochrome c biogenesis protein CcsA.